The following is a 118-amino-acid chain: Small ribosomal subunit protein uS13 (118 aa).

Residues 96-118 form a disordered region; sequence PLRGQRTRTNARTRKGPRKAIKK.

The protein belongs to the universal ribosomal protein uS13 family. In terms of assembly, part of the 30S ribosomal subunit. Forms a loose heterodimer with protein S19. Forms two bridges to the 50S subunit in the 70S ribosome.

Its function is as follows. Located at the top of the head of the 30S subunit, it contacts several helices of the 16S rRNA. In the 70S ribosome it contacts the 23S rRNA (bridge B1a) and protein L5 of the 50S subunit (bridge B1b), connecting the 2 subunits; these bridges are implicated in subunit movement. Contacts the tRNAs in the A and P-sites. This Stenotrophomonas maltophilia (strain K279a) protein is Small ribosomal subunit protein uS13.